Here is a 268-residue protein sequence, read N- to C-terminus: Phosphonates import ATP-binding protein PhnC (268 aa).

Residues 11 to 254 form the ABC transporter domain; it reads LHAEAVTKRF…EVMAIYQRAE (244 aa). Position 43 to 50 (43 to 50) interacts with ATP; the sequence is GLSGSGKS.

Belongs to the ABC transporter superfamily. Phosphonates importer (TC 3.A.1.9.1) family. As to quaternary structure, the complex is composed of two ATP-binding proteins (PhnC), two transmembrane proteins (PhnE) and a solute-binding protein (PhnD).

The protein localises to the cell membrane. It catalyses the reaction phosphonate(out) + ATP + H2O = phosphonate(in) + ADP + phosphate + H(+). Functionally, part of the ABC transporter complex PhnCDE involved in phosphonates import. Responsible for energy coupling to the transport system. The chain is Phosphonates import ATP-binding protein PhnC from Nocardia farcinica (strain IFM 10152).